The chain runs to 281 residues: Undecaprenyl-diphosphatase 1 (281 aa).

A run of 6 helical transmembrane segments spans residues 95–115 (WMVI…KDLI), 119–139 (FRNL…FILA), 152–172 (LTMK…IPGV), 195–215 (FSFL…LPDA), 227–247 (LQLL…IAWL), and 256–276 (FAWF…LLGT).

This sequence belongs to the UppP family.

Its subcellular location is the cell membrane. The catalysed reaction is di-trans,octa-cis-undecaprenyl diphosphate + H2O = di-trans,octa-cis-undecaprenyl phosphate + phosphate + H(+). In terms of biological role, catalyzes the dephosphorylation of undecaprenyl diphosphate (UPP). Confers resistance to bacitracin. The polypeptide is Undecaprenyl-diphosphatase 1 (Corynebacterium jeikeium (strain K411)).